Reading from the N-terminus, the 287-residue chain is Transcription cofactor vestigial-like protein 4 (287 aa).

2 disordered regions span residues 44–68 (ASAL…SMEP) and 251–287 (AAKD…SVVS). A phosphoserine mark is found at Ser58 and Ser271. Positions 275 to 287 (HMVSHSHSPSVVS) are enriched in low complexity.

This sequence belongs to the vestigial family. As to quaternary structure, interacts with TEFs. Interacts with IRF2BP2.

The protein localises to the nucleus. In terms of biological role, may act as a specific coactivator for the mammalian TEFs. The protein is Transcription cofactor vestigial-like protein 4 (Vgll4) of Mus musculus (Mouse).